Consider the following 238-residue polypeptide: 2-C-methyl-D-erythritol 4-phosphate cytidylyltransferase (238 aa).

The protein belongs to the IspD/TarI cytidylyltransferase family. IspD subfamily.

It carries out the reaction 2-C-methyl-D-erythritol 4-phosphate + CTP + H(+) = 4-CDP-2-C-methyl-D-erythritol + diphosphate. It functions in the pathway isoprenoid biosynthesis; isopentenyl diphosphate biosynthesis via DXP pathway; isopentenyl diphosphate from 1-deoxy-D-xylulose 5-phosphate: step 2/6. Its function is as follows. Catalyzes the formation of 4-diphosphocytidyl-2-C-methyl-D-erythritol from CTP and 2-C-methyl-D-erythritol 4-phosphate (MEP). The sequence is that of 2-C-methyl-D-erythritol 4-phosphate cytidylyltransferase from Alteromonas mediterranea (strain DSM 17117 / CIP 110805 / LMG 28347 / Deep ecotype).